Consider the following 366-residue polypeptide: MALCQTSVLKVYHAVIEDVITNVRDAFLDEGVDEQVLQEMKQVWRNKLLASKAVELSPDSGDGSHPPPIVANNPKSHKAANAKAKKAAAATAVTSHQHIGGNSSMSSLVGLKSSAGMAAGSGIRNGLVPIKQEVNSQNPPPLHPTSAASMMQKQQQAASSGQGSIPIVATLDPNRIMPVNITLPSPAGSASSESRVLTIQVPASALQENQLTQILTAHLISSIMSLPTTLASSVLQQHVNAALSSANHQKTLAAAKQLDGALDSSDEDESEESDDNIDNDDDDDLDKDDDEDAEHEDAAEEEPLNSEDDVTDEDSAEMFDTDNVIVCQYDKITRSRNKWKFYLKDGIMNMRGKDYVFQKSNGDAEW.

Disordered regions lie at residues 56-82 (LSPDSGDGSHPPPIVANNPKSHKAANA), 133-162 (EVNSQNPPPLHPTSAASMMQKQQQAASSGQ), and 257-317 (QLDG…DSAE). Positions 146-162 (SAASMMQKQQQAASSGQ) are enriched in low complexity. Residues 264 to 317 (SSDEDESEESDDNIDNDDDDDLDKDDDEDAEHEDAAEEEPLNSEDDVTDEDSAE) are compositionally biased toward acidic residues. 2 positions are modified to phosphoserine; by TAF1: Ser265 and Ser306.

The protein belongs to the TFIIA subunit 1 family. As to quaternary structure, belongs to the TFIID complex which is composed of TATA binding protein (Tbp) and a number of TBP-associated factors (Tafs). TFIIA is a heterodimer of a unprocessed large subunit 1 and a small subunit gamma. It was originally believed to be a heterotrimer of an alpha (p30), a beta (p20) and a gamma subunit (p14). Interacts with Tbp. Taf4 interacts with TFIIA-L when TFIIA-L is in complex with Tbp. Post-translationally, the precursor form (48 kDa) is cleaved to give rise to the alpha (30 kDa) and beta (20 kDa) subunits.

It is found in the nucleus. In terms of biological role, TFIIA is a component of the transcription machinery of RNA polymerase II and plays an important role in transcriptional activation. TFIIA in a complex with TBP mediates transcriptional activity. The protein is Transcription initiation factor IIA subunit 1 (TfIIA-L) of Drosophila melanogaster (Fruit fly).